Reading from the N-terminus, the 638-residue chain is Homeobox protein 10 (638 aa).

3 disordered regions span residues 23–55, 76–139, and 195–219; these read ETQP…LNTN, TDEN…VNTN, and IANE…EEAK. Composition is skewed to low complexity over residues 24-55 and 80-139; these read TQPT…LNTN and NTSV…VNTN. Positions 205–214 are enriched in polar residues; the sequence is EPQTNSNVNG. Residues 301 to 360 constitute a DNA-binding region (homeobox); it reads NKKKRQRTSPEQLAILEQIFETDKMPSQQIRVRLANQLGMSSRRVQIWFQNKRAKVKRGG. Disordered stretches follow at residues 381–431 and 448–638; these read EDED…TSSD and SSSS…IVKN. Low complexity-rich tracts occupy residues 388-411, 419-430, and 462-501; these read SLTI…NNNG, LSSSPTNLNTSS, and NNTN…TTTT. Polar residues-rich tracts occupy residues 502–522 and 545–573; these read SSSP…NKLT and SLNS…TDKQ. The segment covering 575 to 625 has biased composition (low complexity); that stretch reads NSDFSNFNNNNNNNNNNNNNNNNNNNINNNGNNNSNNNDSNNNNNKSNFSD.

The protein resides in the nucleus. Putative transcription factor. In Dictyostelium discoideum (Social amoeba), this protein is Homeobox protein 10 (hbx10).